Here is a 552-residue protein sequence, read N- to C-terminus: MTDVKKSIRANRGTELECLGWEQEAVLRMLRNNLDPEVAEKPEDLIVYGGIGKAARDWDAFHAIEHSLKTLKNDETLLVQSGKPVGMFRTHPQAPRVLLANSVLVPKWADWEHFHELEKKGLMMYGQMTAGSWIYIGSQGILQGTYETFAELARQHFGGSLKGTLTLTAGLGGMGGAQPLSVTMNEGVVIAVEVDEKRIDKRIETKYCDRKTASIEEALAWAEEAKLAGKPLSIALLGNAAEVHHTLLNRGVKIDIVTDQTSAHDPLIGYVPEGYSLDEADRLRQDTPELYVRLAKQSMKKHVEAMLAFQQKGSIVFDYGNNIRQVAKDEGLENAFDFPGFVPAYIRPLFCEGKGPFRWAALSGDPADIYRTDALLKELFPTNKALHRWIDMAQEKVTFQGLPSRICWLGYGERKKMGLAINELVRTGELKAPVVIGRDHLDCGSVASPNRETEAMKDGSDAVGDWAVLNALVNTAAGASWVSFHHGGGVGMGYSLHAGMVAVADGSELADERLARVLTSDPGMGIIRHADAGYERAVEVAKEQDIIVPMQK.

NAD(+)-binding positions include 49–50 (GG), glutamine 127, 173–175 (GMG), glutamate 193, arginine 198, 239–240 (NA), 260–264 (QTSAH), 270–271 (YV), and tyrosine 319. Cysteine 407 is a catalytic residue. Glycine 489 is an NAD(+) binding site.

The protein belongs to the urocanase family. Composed of at least two subunits. The cofactor is NAD(+).

It is found in the cytoplasm. The catalysed reaction is 4-imidazolone-5-propanoate = trans-urocanate + H2O. It functions in the pathway amino-acid degradation; L-histidine degradation into L-glutamate; N-formimidoyl-L-glutamate from L-histidine: step 2/3. Its function is as follows. Catalyzes the conversion of urocanate to 4-imidazolone-5-propionate. The protein is Urocanate hydratase of Bacillus subtilis (strain 168).